A 226-amino-acid chain; its full sequence is MNLSFFDQFMSPVILGIPLIAIAMLDPFTLISWPIQSNGFNNRLITLQSWFLHNFTTIFYQLTSPGHKWALLLTSLMLLLMSLNLLGLLPYTFTPTTQLSLNMGLAVPLWLATVIMASKPTNYALGHLLPEGTPTPLIPVLIIIETISLFIRPLALGVRLTANLTAGHLLIQLIATAAFVLLSIMPTVAILTSIVLFLLTLLEIAVAMIQAYVFVLLLSLYLQENV.

6 consecutive transmembrane segments (helical) span residues 13 to 33 (VILG…LISW), 69 to 89 (WALL…LGLL), 97 to 117 (TQLS…VIMA), 138 to 158 (IPVL…ALGV), 179 to 199 (FVLL…LFLL), and 201 to 221 (LLEI…LSLY).

It belongs to the ATPase A chain family. In terms of assembly, component of the ATP synthase complex composed at least of ATP5F1A/subunit alpha, ATP5F1B/subunit beta, ATP5MC1/subunit c (homooctomer), MT-ATP6/subunit a, MT-ATP8/subunit 8, ATP5ME/subunit e, ATP5MF/subunit f, ATP5MG/subunit g, ATP5MK/subunit k, ATP5MJ/subunit j, ATP5F1C/subunit gamma, ATP5F1D/subunit delta, ATP5F1E/subunit epsilon, ATP5PF/subunit F6, ATP5PB/subunit b, ATP5PD/subunit d, ATP5PO/subunit OSCP. ATP synthase complex consists of a soluble F(1) head domain (subunits alpha(3) and beta(3)) - the catalytic core - and a membrane F(0) domain - the membrane proton channel (subunits c, a, 8, e, f, g, k and j). These two domains are linked by a central stalk (subunits gamma, delta, and epsilon) rotating inside the F1 region and a stationary peripheral stalk (subunits F6, b, d, and OSCP). Interacts with DNAJC30; interaction is direct.

Its subcellular location is the mitochondrion inner membrane. It carries out the reaction H(+)(in) = H(+)(out). Its function is as follows. Subunit a, of the mitochondrial membrane ATP synthase complex (F(1)F(0) ATP synthase or Complex V) that produces ATP from ADP in the presence of a proton gradient across the membrane which is generated by electron transport complexes of the respiratory chain. ATP synthase complex consist of a soluble F(1) head domain - the catalytic core - and a membrane F(1) domain - the membrane proton channel. These two domains are linked by a central stalk rotating inside the F(1) region and a stationary peripheral stalk. During catalysis, ATP synthesis in the catalytic domain of F(1) is coupled via a rotary mechanism of the central stalk subunits to proton translocation. With the subunit c (ATP5MC1), forms the proton-conducting channel in the F(0) domain, that contains two crucial half-channels (inlet and outlet) that facilitate proton movement from the mitochondrial intermembrane space (IMS) into the matrix. Protons are taken up via the inlet half-channel and released through the outlet half-channel, following a Grotthuss mechanism. The chain is ATP synthase F(0) complex subunit a from Xenopus laevis (African clawed frog).